The following is an 84-amino-acid chain: MSAEKSQNVQDVFLNFIRKNKTPVTIFLVNGVKLQGIVTWFDNFSVLLRRDGHTQLVYKHAISTVMPSTPISLFEPPIKENGEE.

In terms of domain architecture, Sm spans 11 to 71 (DVFLNFIRKN…ISTVMPSTPI (61 aa)).

Belongs to the Hfq family. Homohexamer.

Its function is as follows. RNA chaperone that binds small regulatory RNA (sRNAs) and mRNAs to facilitate mRNA translational regulation in response to envelope stress, environmental stress and changes in metabolite concentrations. Also binds with high specificity to tRNAs. The polypeptide is RNA-binding protein Hfq (Paramagnetospirillum magneticum (strain ATCC 700264 / AMB-1) (Magnetospirillum magneticum)).